The chain runs to 215 residues: Glycerol-3-phosphate acyltransferase (215 aa).

A run of 6 helical transmembrane segments spans residues 3–23 (LILLILTAYLLGSIPTGLWIG), 42–61 (TNTFRILGLKAGAATLLIDI), 68–90 (TLLPVLVGASNVSPIAIGFFAVL), 110–130 (AGVLLGFAPLYLLFLAAVFVL), 134–154 (LFSMISLASLTASVVAVISVL), and 162–182 (LLPGYDWLLTITIVVLAAIII).

This sequence belongs to the PlsY family. Probably interacts with PlsX.

It localises to the cell membrane. It catalyses the reaction an acyl phosphate + sn-glycerol 3-phosphate = a 1-acyl-sn-glycero-3-phosphate + phosphate. The protein operates within lipid metabolism; phospholipid metabolism. Its function is as follows. Catalyzes the transfer of an acyl group from acyl-phosphate (acyl-PO(4)) to glycerol-3-phosphate (G3P) to form lysophosphatidic acid (LPA). This enzyme utilizes acyl-phosphate as fatty acyl donor, but not acyl-CoA or acyl-ACP. This Streptococcus equi subsp. zooepidemicus (strain H70) protein is Glycerol-3-phosphate acyltransferase.